The primary structure comprises 138 residues: Large ribosomal subunit protein mL43 (138 aa).

Belongs to the mitochondrion-specific ribosomal protein mL43 family. In terms of assembly, component of the mitochondrial large ribosomal subunit (mt-LSU). Mature N.crassa 74S mitochondrial ribosomes consist of a small (37S) and a large (54S) subunit. The 37S small subunit contains a 16S ribosomal RNA (16S mt-rRNA) and 32 different proteins. The 54S large subunit contains a 23S rRNA (23S mt-rRNA) and 42 different proteins.

The protein localises to the mitochondrion. Component of the mitochondrial ribosome (mitoribosome), a dedicated translation machinery responsible for the synthesis of mitochondrial genome-encoded proteins, including at least some of the essential transmembrane subunits of the mitochondrial respiratory chain. The mitoribosomes are attached to the mitochondrial inner membrane and translation products are cotranslationally integrated into the membrane. The protein is Large ribosomal subunit protein mL43 (mrpl51) of Neurospora crassa (strain ATCC 24698 / 74-OR23-1A / CBS 708.71 / DSM 1257 / FGSC 987).